A 326-amino-acid chain; its full sequence is MKHFLRMLIQVCLYFYCKFLWRCLKFVMRKLTGRCELQRICYNTKPGASRTMKIETSLRDSKSKLLQTSVSVHPDAIEKTIEDIMELKKINPDVNPQLGISLQACLLQIVGYRNLIADVEKLRREPYDSDNPQHEEMLLKLWKFLKPNTPLESRISKQWCEIGFQGDDPKTDFRGMGLLGLYNLQYFAERDATAAQQVLSDSLHPKCSKFSKAEWEKKRMDKAIGYSFAIVGINITDLAYNLLVSGALKTHFYNIAPEAPTLSHFQQTFCYLMHEFHKFWIEEDPMDIMEFNRVREKFRKRIIKQLQNPDMALCPHFAASEGLINM.

An ELMO domain is found at 133 to 306; it reads QHEEMLLKLW…KFRKRIIKQL (174 aa).

Acts as a GTPase-activating protein (GAP) toward guanine nucleotide exchange factors like ARL2, ARL3, ARF1 and ARF6, but not for GTPases outside the Arf family. This is ELMO domain-containing protein 1 (ELMOD1) from Pongo abelii (Sumatran orangutan).